Here is a 396-residue protein sequence, read N- to C-terminus: Putative nickel insertion protein (396 aa).

Belongs to the LarC family.

In Wolinella succinogenes (strain ATCC 29543 / DSM 1740 / CCUG 13145 / JCM 31913 / LMG 7466 / NCTC 11488 / FDC 602W) (Vibrio succinogenes), this protein is Putative nickel insertion protein.